Reading from the N-terminus, the 398-residue chain is tRNA-specific 2-thiouridylase MnmA (398 aa).

ATP is bound by residues 33-40 and methionine 59; that span reads GMSGGVDS. The tract at residues 119–121 is interaction with target base in tRNA; that stretch reads NPD. Catalysis depends on cysteine 124, which acts as the Nucleophile. Cysteine 124 and cysteine 226 are disulfide-bonded. Glycine 148 is an ATP binding site. Residues 176–178 form an interaction with tRNA region; the sequence is KDQ. Cysteine 226 functions as the Cysteine persulfide intermediate in the catalytic mechanism. The tract at residues 343-344 is interaction with tRNA; that stretch reads RY.

This sequence belongs to the MnmA/TRMU family.

It localises to the cytoplasm. The catalysed reaction is S-sulfanyl-L-cysteinyl-[protein] + uridine(34) in tRNA + AH2 + ATP = 2-thiouridine(34) in tRNA + L-cysteinyl-[protein] + A + AMP + diphosphate + H(+). Catalyzes the 2-thiolation of uridine at the wobble position (U34) of tRNA, leading to the formation of s(2)U34. The chain is tRNA-specific 2-thiouridylase MnmA from Psychrobacter sp. (strain PRwf-1).